A 94-amino-acid polypeptide reads, in one-letter code: Adaptation to cold protein J (94 aa).

In terms of domain architecture, J spans 3–93 (NHFSVLGIKP…AMRELWDQFY (91 aa)). The interval 74–94 (NNVIVTDPNSAMRELWDQFYP) is essential for interaction with AtcC.

In terms of assembly, interacts via its C-terminal extension with AtcC. Does not interact with AtcA and AtcB.

In terms of biological role, involved in cold adaptation. The J-domain is functional and can stimulate the ATPase activity of the DnaK chaperone. May work as a co-chaperone of the DnaK system to support cold resistance. This Shewanella oneidensis (strain ATCC 700550 / JCM 31522 / CIP 106686 / LMG 19005 / NCIMB 14063 / MR-1) protein is Adaptation to cold protein J.